The sequence spans 102 residues: MIRRFFHTMGRQDRIYKTLSEALKTDKITLYNDSYKHSHHIAMKGVPDTNETHFRLEIVSPEFSGMSRVARHRLVYGLLKDEFDGGLHALQITSSKTPDEVS.

It belongs to the BolA/IbaG family.

It localises to the mitochondrion matrix. It is found in the cytoplasm. The protein resides in the nucleus. Acts as a mitochondrial iron-sulfur (Fe-S) cluster assembly factor that facilitates [4Fe-4S] cluster insertion into a subset of mitochondrial proteins such as lipoyl synthase (LS) and succinate dehydrogenase (SDH). Required during the last step of iron-sulfur protein assembly when the iron-sulfur cluster is inserted into the target protein. Probably acts together with the monothiol glutaredoxin grx5. Not required for [2Fe-2S] cluster insertion into mitochondrial proteins. May be involved in control of cell division, especially during the resumption from cell cycle arrest. In Schizosaccharomyces pombe (strain 972 / ATCC 24843) (Fission yeast), this protein is UV-induced protein uvi31.